Here is a 943-residue protein sequence, read N- to C-terminus: Isoleucine--tRNA ligase (943 aa).

The 'HIGH' region motif lies at 58-68 (PYANGKIHIGH). Position 567 (E567) interacts with L-isoleucyl-5'-AMP. Positions 608–612 (KMSKS) match the 'KMSKS' region motif. K611 serves as a coordination point for ATP. 4 residues coordinate Zn(2+): C906, C909, C926, and C929.

The protein belongs to the class-I aminoacyl-tRNA synthetase family. IleS type 1 subfamily. As to quaternary structure, monomer. Zn(2+) serves as cofactor.

Its subcellular location is the cytoplasm. It catalyses the reaction tRNA(Ile) + L-isoleucine + ATP = L-isoleucyl-tRNA(Ile) + AMP + diphosphate. Catalyzes the attachment of isoleucine to tRNA(Ile). As IleRS can inadvertently accommodate and process structurally similar amino acids such as valine, to avoid such errors it has two additional distinct tRNA(Ile)-dependent editing activities. One activity is designated as 'pretransfer' editing and involves the hydrolysis of activated Val-AMP. The other activity is designated 'posttransfer' editing and involves deacylation of mischarged Val-tRNA(Ile). In Pseudomonas putida (strain GB-1), this protein is Isoleucine--tRNA ligase.